We begin with the raw amino-acid sequence, 528 residues long: Sphingosine-1-phosphate lyase (528 aa).

The helical transmembrane segment at 13-35 (PAKLVLATAGITAASILAYQAIT) threads the bilayer. An N6-(pyridoxal phosphate)lysine modification is found at Lys324.

The protein belongs to the group II decarboxylase family. Sphingosine-1-phosphate lyase subfamily. Pyridoxal 5'-phosphate serves as cofactor.

It localises to the endoplasmic reticulum membrane. It carries out the reaction sphinganine 1-phosphate = hexadecanal + phosphoethanolamine. The protein operates within lipid metabolism; sphingolipid metabolism. In terms of biological role, cleaves phosphorylated sphingoid bases (PSBs), such as sphingosine-1-phosphate, into fatty aldehydes and phosphoethanolamine. Sphingosine-1-phosphate (S1P) probably acts intracellularly as a second messenger perhaps by promoting cell proliferation; the absence of S1P lyase increases its concentration. This leads to increased lateral pseudopod formation as well as defects in the efficiency of chemotaxis. Overexpression of S1P lyase causes decreased growth rates, entry into stationary phase at lower cell density and increased sensitivity to the antitumor agents cisplatin and carboplatin; these effects are more pronounced in cells that express more enzyme. The sequence is that of Sphingosine-1-phosphate lyase (sglA) from Dictyostelium discoideum (Social amoeba).